We begin with the raw amino-acid sequence, 308 residues long: 2-dehydro-3-deoxy-phosphogluconate/2-dehydro-3-deoxy-6-phosphogalactonate aldolase (308 aa).

Substrate contacts are provided by residues 57-58, 144-146, and 169-171; these read TT, YNY, and KDT. Residue Lys-169 is the Schiff-base intermediate with substrate of the active site.

This sequence belongs to the DapA family. KDPG aldolase subfamily. As to quaternary structure, homotetramer; dimer of dimers.

It catalyses the reaction 2-dehydro-3-deoxy-6-phospho-D-gluconate = D-glyceraldehyde 3-phosphate + pyruvate. The enzyme catalyses 2-dehydro-3-deoxy-6-phospho-D-galactonate = D-glyceraldehyde 3-phosphate + pyruvate. The protein operates within carbohydrate acid metabolism; 2-dehydro-3-deoxy-D-gluconate degradation; D-glyceraldehyde 3-phosphate and pyruvate from 2-dehydro-3-deoxy-D-gluconate: step 2/2. Functionally, involved in the degradation of glucose and galactose via the Entner-Doudoroff pathway. Catalyzes the reversible cleavage of 2-keto-3-deoxy-6-phosphogluconate (KDPG) and 2-keto-3-deoxygluconate (KDG) forming pyruvate and glyceraldehyde 3-phosphate or glyceraldehyde, respectively. It is also able to catalyze the reversible cleavage of 2-keto-3-deoxy-6-phosphogalactonate (KDPGal) and 2-keto-3-deoxygalactonate (KDGal). This chain is 2-dehydro-3-deoxy-phosphogluconate/2-dehydro-3-deoxy-6-phosphogalactonate aldolase (eda), found in Saccharolobus solfataricus (strain ATCC 35092 / DSM 1617 / JCM 11322 / P2) (Sulfolobus solfataricus).